The sequence spans 198 residues: Recombination protein RecR (198 aa).

The C4-type zinc-finger motif lies at 56–71 (CKVCGNFSEEDECVIC). Residues 79–174 (GVICVVEEPK…RVSKLASGLP (96 aa)) form the Toprim domain.

This sequence belongs to the RecR family.

May play a role in DNA repair. It seems to be involved in an RecBC-independent recombinational process of DNA repair. It may act with RecF and RecO. This chain is Recombination protein RecR, found in Tropheryma whipplei (strain Twist) (Whipple's bacillus).